An 87-amino-acid chain; its full sequence is Large ribosomal subunit protein bL31B (87 aa).

The protein belongs to the bacterial ribosomal protein bL31 family. Type B subfamily. Part of the 50S ribosomal subunit.

The polypeptide is Large ribosomal subunit protein bL31B (Klebsiella pneumoniae (strain 342)).